The sequence spans 397 residues: MSASIYLVKGREKSLLRRHPWIFSKGIERVQGNPIDGDTVEIYTQDGKWLARGAWSGSSQIRARVWTFDKEETVDLDFFIRRLKYAQESRDGLIKRQGLTGYRLCAAESDGLPGLTIDRYADFLVCQILSAGAEFQRDLITQALRTLYPECSIYERSDVAVRKKEGLKERTGVIYGETPTEPVVIEENGGVKILVDIRNGHKTGFYLDQRDNRQAAAKYTEGKRVLNCFCYTGGFGVYALKGGAKEVVNVDLSQNALDIARQNAELNGLDTSNTQFVRHDVFKLLREYREKGDKFDVIVLDPPKFAESKAQLLGACRGYKDINMLAFQLLAPGGVLLTYSCSGLMEQSLFQKIVADAALDAGRDAQILELLSQASDHPIGTAYPEGFYLKGLVVRAR.

In terms of domain architecture, PUA spans 2–79 (SASIYLVKGR…KEETVDLDFF (78 aa)).

This sequence belongs to the methyltransferase superfamily. RlmI family.

The protein localises to the cytoplasm. It carries out the reaction cytidine(1962) in 23S rRNA + S-adenosyl-L-methionine = 5-methylcytidine(1962) in 23S rRNA + S-adenosyl-L-homocysteine + H(+). Functionally, specifically methylates the cytosine at position 1962 (m5C1962) of 23S rRNA. The protein is Ribosomal RNA large subunit methyltransferase I of Aeromonas hydrophila subsp. hydrophila (strain ATCC 7966 / DSM 30187 / BCRC 13018 / CCUG 14551 / JCM 1027 / KCTC 2358 / NCIMB 9240 / NCTC 8049).